Reading from the N-terminus, the 522-residue chain is ATP synthase subunit alpha (522 aa).

Position 176–183 (176–183) interacts with ATP; sequence GDRQTGKT.

This sequence belongs to the ATPase alpha/beta chains family. F-type ATPases have 2 components, CF(1) - the catalytic core - and CF(0) - the membrane proton channel. CF(1) has five subunits: alpha(3), beta(3), gamma(1), delta(1), epsilon(1). CF(0) has four main subunits: a, b, b' and c.

Its subcellular location is the cell membrane. The enzyme catalyses ATP + H2O + 4 H(+)(in) = ADP + phosphate + 5 H(+)(out). In terms of biological role, produces ATP from ADP in the presence of a proton gradient across the membrane. The alpha chain is a regulatory subunit. The polypeptide is ATP synthase subunit alpha (Chloroflexus aggregans (strain MD-66 / DSM 9485)).